The sequence spans 569 residues: MSLLVKAALILKCASMLQGVSAQYFCRDTTFDKRTLESVRFESECIPTVNKRDLDPNAEGVYKRSFDGNMNPSDFQLLPLAPRDGAIVNVDKESFSKRSTTNMFDFNFSCYFGSDGHSNDTLCQQYIDVADSVGEQFSRVLNLNTPIVIDVTVVGACTGESVCSQGQGMVAGSIGGEASPSREIPMACSDGLTRYYPQAVVKQLGLSDPPSYADSDITIALNADANFYFGSGDMGYEAVDLAYVLFHEITHGLGFSTGWGVFGYENLTDPYMNALLPTVSYVIGEMNGETMYAFHDVIENAFDRNIFYSIDPNEGLPTIAEFFHSVGAAFTLKADSIAGVVAQMNDTTTQFHIQANEAYRKAINPGRLVIYPDAGIDTYSPFIYLDSSYVPFSSGSSLSHVALHHYDCEPNFLMRAFYTAGATLESYIECAYGSDQADVAYGPIGPAMRTVFRRMGYSVNNLTGVTNEYSESLAKRSLSEKPKTAPTGKQLALHPLRRETSILDSTNTTSTNATNTTTTTSSSSTASSSASASSSTSATSGAAGDLFSVSKNLMMTLTAGLCLITASLF.

The signal sequence occupies residues 1–22; the sequence is MSLLVKAALILKCASMLQGVSA. The segment at 498–541 is disordered; that stretch reads RETSILDSTNTTSTNATNTTTTTSSSSTASSSASASSSTSATSG. The span at 505-540 shows a compositional bias: low complexity; it reads STNTTSTNATNTTTTTSSSSTASSSASASSSTSATS.

Its subcellular location is the secreted. It is found in the cell surface. This is an uncharacterized protein from Schizosaccharomyces pombe (strain 972 / ATCC 24843) (Fission yeast).